The sequence spans 413 residues: Acyltransferase mokF (413 aa).

Residue R93 coordinates monacolin J. S96 functions as the Acyl-ester intermediate in the catalytic mechanism. Residues R193, Y208, and Y278 each contribute to the monacolin J site. Residue G386 coordinates 2-methylbutanoate.

The protein belongs to the class-A beta-lactamase family.

It catalyses the reaction monacolin J carboxylate + (S)-2-methylbutanoyl-[2-methylbutanoate polyketide synthase] = lovastatin carboxylate + holo-[2-methylbutanoate polyketide synthase]. Its pathway is polyketide biosynthesis; lovastatin biosynthesis. Acyltransferase; part of the gene cluster that mediates the biosynthesis of monakolin K, also known as lovastatin, and which acts as a potent competitive inhibitor of HMG-CoA reductase. Monakolin K biosynthesis is performed in two stages. The first stage is catalyzed by the nonaketide synthase mokA, which belongs to type I polyketide synthases and catalyzes the iterative nine-step formation of the polyketide. This PKS stage is completed by the action of dehydrogenase mokE, which catalyzes the NADPH-dependent reduction of the unsaturated tetra-, penta- and heptaketide intermediates that arise during the mokA-mediated biosynthesis of the nonaketide chain and leads to dihydromonacolin L. Covalently bound dihydromonacolin L is released from mokA by the mokD esterase. Conversion of dihydromonacolin L into monacolin L and then monacolin J is subsequently performed with the participation of molecular oxygen and P450 monoogygenase mokC. Finally, mokF performs the conversion of monacoline J to monacoline K through the addition of the side-chain diketide moiety (2R)-2-methylbutanoate produced by the diketide synthase mokB. This chain is Acyltransferase mokF, found in Monascus pilosus (Red mold).